The chain runs to 49 residues: Large ribosomal subunit protein bL33A (49 aa).

Residues 20-49 (KKNKRNNPDRVEFKKYCPRDKKSTLHRETK) form a disordered region. A compositionally biased stretch (basic and acidic residues) spans 25–49 (NNPDRVEFKKYCPRDKKSTLHRETK).

The protein belongs to the bacterial ribosomal protein bL33 family. In terms of assembly, part of the 50S ribosomal subunit. Interacts with VmlR.

This chain is Large ribosomal subunit protein bL33A (rpmGA), found in Bacillus subtilis (strain 168).